The chain runs to 206 residues: Na(+)-translocating NADH-quinone reductase subunit E (206 aa).

6 consecutive transmembrane segments (helical) span residues 12–32 (AVFV…FIAI), 36–56 (IQTA…TVPV), 85–105 (FLGL…LEMT), 118–138 (GIFL…LFMV), 148–168 (VVYG…LAGI), and 184–204 (LGIT…FSGV).

This sequence belongs to the NqrDE/RnfAE family. In terms of assembly, composed of six subunits; NqrA, NqrB, NqrC, NqrD, NqrE and NqrF.

Its subcellular location is the cell inner membrane. It carries out the reaction a ubiquinone + n Na(+)(in) + NADH + H(+) = a ubiquinol + n Na(+)(out) + NAD(+). Functionally, NQR complex catalyzes the reduction of ubiquinone-1 to ubiquinol by two successive reactions, coupled with the transport of Na(+) ions from the cytoplasm to the periplasm. NqrA to NqrE are probably involved in the second step, the conversion of ubisemiquinone to ubiquinol. The polypeptide is Na(+)-translocating NADH-quinone reductase subunit E (Alcanivorax borkumensis (strain ATCC 700651 / DSM 11573 / NCIMB 13689 / SK2)).